The following is a 256-amino-acid chain: Dioxygenase lolE1 (256 aa).

Fe cation contacts are provided by histidine 125, aspartate 127, and histidine 203.

This sequence belongs to the PhyH family. As to quaternary structure, homodimer. Requires Fe cation as cofactor.

It participates in alkaloid biosynthesis. Its function is as follows. Dioxygenase; part of the gene cluster that mediates the biosynthesis of loline alkaloids, potent insecticidal agents composed of a pyrrolizidine ring system and an uncommon ether bridge linking carbons 2 and 7. Lolines are structurally differentiated by the various modifications of the L-amino group and include norloline, loline, N-methylloline, N-acetylloline, N-acetylnorloline, and N-formylloline. The first committed step is the condensation of O-acetyl-L-homoserine (derived from L-aspartic acid) and L-proline, probably catalyzed by the gamma-type pyridoxal 5'-phosphate(PLP)-dependent enzyme lolC, to give the diamino diacid, NACPP. Ensuing cyclization, decarboxylation, and acetylation steps yield 1-exo-acetamidopyrrolizidine (AcAP). LolO is required for installation of the ether bridge upon the pathway intermediate, 1-exo-acetamidopyrrolizidine (AcAP). In sequential 2-oxoglutarate- and O(2)-consuming steps, lolO removes hydrogens from C2 and C7 of AcAP to form both carbon-oxygen bonds in N-acetylnorloline (NANL), the precursor to all other lolines. The enzymes lolD, lolE, lolF and lolT have also been proposed to be involved in the ether-bridge installation. Further processing of the exocyclic moiety of NANL by fungal N-acetamidase (LolN), methyltransferase (LolM), and cytochrome P450 (LolP) enzymes, with occasional involvement of a plant acetyltransferase, generates the other known lolines. LolN transforms NANL to norlonine which is monomethylated and dimethylated to respectively lonine and N-methyllonine (NML) by lolM. LolP catalyzes hydroxylation of the methyl group in N-methylloline (NML) and further oxygenation to N-formylloline (NFL). A plant acetyltransferase is responsible for the acetylation of loline to form N-acetylloline (NAL). LolA might interact with aspartate kinase to prevent feedback inhibition of its activity by these end products and thereby promote production of L-homoserine from L-aspartate. This chain is Dioxygenase lolE1, found in Epichloe uncinata (Endophyte fungus).